The primary structure comprises 986 residues: Translation initiation factor IF-2 (986 aa).

Residues S47 to E388 form a disordered region. Positions P53 to V64 are enriched in basic and acidic residues. The segment covering P78 to E94 has biased composition (low complexity). Basic and acidic residues predominate over residues A95–K113. 2 stretches are compositionally biased toward low complexity: residues E127–A141 and A153–A214. Basic and acidic residues-rich tracts occupy residues K215–T225 and G268–A278. Positions P286–G300 are enriched in low complexity. The segment covering G358–F374 has biased composition (basic and acidic residues). A tr-type G domain is found at K486–E653. Positions G495 to T502 are G1. Position 495–502 (G495–T502) interacts with GTP. The G2 stretch occupies residues G520 to H524. A G3 region spans residues D541 to G544. GTP is bound by residues D541–H545 and N595–D598. Positions N595–D598 are G4. A G5 region spans residues S631 to K633.

It belongs to the TRAFAC class translation factor GTPase superfamily. Classic translation factor GTPase family. IF-2 subfamily.

The protein resides in the cytoplasm. Its function is as follows. One of the essential components for the initiation of protein synthesis. Protects formylmethionyl-tRNA from spontaneous hydrolysis and promotes its binding to the 30S ribosomal subunits. Also involved in the hydrolysis of GTP during the formation of the 70S ribosomal complex. The polypeptide is Translation initiation factor IF-2 (Citrifermentans bemidjiense (strain ATCC BAA-1014 / DSM 16622 / JCM 12645 / Bem) (Geobacter bemidjiensis)).